The chain runs to 214 residues: Soluble inorganic pyrophosphatase (214 aa).

The disordered stretch occupies residues 1–20; it reads MSEEDKTAASAEQPKRAPKL. Positions 64, 78, and 90 each coordinate substrate. 3 residues coordinate Mg(2+): Asp100, Asp105, and Asp137. Position 174 (Tyr174) interacts with substrate.

Belongs to the PPase family. It depends on Mg(2+) as a cofactor.

Its subcellular location is the cytoplasm. It catalyses the reaction diphosphate + H2O = 2 phosphate + H(+). The sequence is that of Soluble inorganic pyrophosphatase (IPP) from Zea mays (Maize).